A 702-amino-acid polypeptide reads, in one-letter code: MNHTHETIIAGRPMKVEFGKLGMLSDAAILMSYGDTVILTNVNASEKPREGIDFFPLSVEYEERLYSVGKIPGGFIKREGKPSEKAILNGRAIDRPLRPLFPKGYRNDVQVVCTVVSVENDNLPEILAINAASMALCLSSIPFTTPVAAVQVGLIGEEFILNPTSKEREESSLQLTVCATKERVMMIEAGGDEIPEDTMINAIKFGFDKCQDIIKFQEEAVSMFGKEKKVPELHKVPEEIEEAVREFAFDMISESMHITDRDERNAAMDEVKAKINEEFEEKYPDNMSDIGEAVYDMQKEVVRHMLLKEGKRPDGRAFDEVRNIGCEVGLLPRTHGTGLFTRGLTQVMTVATLGSISEIQILDGIGEEESKRYMHHYNFPAYSVGEVRPLRGPGRREIGHGALAERALEPLIPSEAKFPYTIRLVSEVLSSNGSTSQASVCGSTLALLDAGVPIKRPAAGIAMGLITSKDLTEEEVLTDIQGLEDFFGDMDFKVAGTEEGITSIQVDTKIKGLSEKVIHDAIYGARKARLMILDKIKECIPAPREEVSKYAPKTSTLQIDPEKIRDVIGAGGKVINKIIADTGVKIDIKEDGLVYVSSAESEGVKEAVKIIEGLTKEVKAGEIYLGKVTKIAQFGAFVEVLPNKEGLVHISKLDNKRVEKVEDVVSVGDEILVKVTEIDSQGRINLSRKDAIKEAEEENKQQ.

Positions 485 and 491 each coordinate Mg(2+). The 60-residue stretch at 552–611 (PKTSTLQIDPEKIRDVIGAGGKVINKIIADTGVKIDIKEDGLVYVSSAESEGVKEAVKII) folds into the KH domain. The region spanning 621–689 (GEIYLGKVTK…SQGRINLSRK (69 aa)) is the S1 motif domain.

Belongs to the polyribonucleotide nucleotidyltransferase family. It depends on Mg(2+) as a cofactor.

The protein resides in the cytoplasm. The enzyme catalyses RNA(n+1) + phosphate = RNA(n) + a ribonucleoside 5'-diphosphate. In terms of biological role, involved in mRNA degradation. Catalyzes the phosphorolysis of single-stranded polyribonucleotides processively in the 3'- to 5'-direction. The protein is Polyribonucleotide nucleotidyltransferase of Clostridium perfringens (strain ATCC 13124 / DSM 756 / JCM 1290 / NCIMB 6125 / NCTC 8237 / Type A).